Reading from the N-terminus, the 388-residue chain is Succinate--CoA ligase [ADP-forming] subunit beta (388 aa).

The region spanning 9–244 is the ATP-grasp domain; the sequence is KQLFARSGLP…QSQEDPREAQ (236 aa). ATP-binding positions include Lys-46, 53–55, Glu-99, Thr-102, and Glu-107; that span reads GRG. Mg(2+)-binding residues include Asn-199 and Asp-213. Substrate contacts are provided by residues Asn-264 and 321–323; that span reads GIV.

Belongs to the succinate/malate CoA ligase beta subunit family. As to quaternary structure, heterotetramer of two alpha and two beta subunits. The cofactor is Mg(2+).

It carries out the reaction succinate + ATP + CoA = succinyl-CoA + ADP + phosphate. It catalyses the reaction GTP + succinate + CoA = succinyl-CoA + GDP + phosphate. Its pathway is carbohydrate metabolism; tricarboxylic acid cycle; succinate from succinyl-CoA (ligase route): step 1/1. In terms of biological role, succinyl-CoA synthetase functions in the citric acid cycle (TCA), coupling the hydrolysis of succinyl-CoA to the synthesis of either ATP or GTP and thus represents the only step of substrate-level phosphorylation in the TCA. The beta subunit provides nucleotide specificity of the enzyme and binds the substrate succinate, while the binding sites for coenzyme A and phosphate are found in the alpha subunit. The polypeptide is Succinate--CoA ligase [ADP-forming] subunit beta (Cronobacter sakazakii (strain ATCC BAA-894) (Enterobacter sakazakii)).